The sequence spans 280 residues: Diaminopimelate epimerase (280 aa).

Substrate is bound by residues N13 and N66. The Proton donor role is filled by C75. Substrate is bound by residues G76–N77, N162, N195, and E213–R214. Residue C222 is the Proton acceptor of the active site. A substrate-binding site is contributed by G223 to T224.

This sequence belongs to the diaminopimelate epimerase family. Homodimer.

It localises to the cytoplasm. The enzyme catalyses (2S,6S)-2,6-diaminopimelate = meso-2,6-diaminopimelate. It functions in the pathway amino-acid biosynthesis; L-lysine biosynthesis via DAP pathway; DL-2,6-diaminopimelate from LL-2,6-diaminopimelate: step 1/1. In terms of biological role, catalyzes the stereoinversion of LL-2,6-diaminopimelate (L,L-DAP) to meso-diaminopimelate (meso-DAP), a precursor of L-lysine and an essential component of the bacterial peptidoglycan. The sequence is that of Diaminopimelate epimerase from Synechococcus elongatus (strain ATCC 33912 / PCC 7942 / FACHB-805) (Anacystis nidulans R2).